Consider the following 293-residue polypeptide: Probable mediator of RNA polymerase II transcription subunit 15b (293 aa).

The protein belongs to the plant Mediator complex subunit 15 family. As to quaternary structure, component of the Mediator complex.

It localises to the nucleus. Component of the Mediator complex, a coactivator involved in the regulated transcription of nearly all RNA polymerase II-dependent genes. Mediator functions as a bridge to convey information from gene-specific regulatory proteins to the basal RNA polymerase II transcription machinery. The Mediator complex, having a compact conformation in its free form, is recruited to promoters by direct interactions with regulatory proteins and serves for the assembly of a functional preinitiation complex with RNA polymerase II and the general transcription factors. This Arabidopsis thaliana (Mouse-ear cress) protein is Probable mediator of RNA polymerase II transcription subunit 15b (MED15B).